Reading from the N-terminus, the 673-residue chain is UvrABC system protein B (673 aa).

The region spanning 26–183 (EGLEDGLAHQ…RRLAELQYTR (158 aa)) is the Helicase ATP-binding domain. 39–46 (GVTGSGKT) serves as a coordination point for ATP. A Beta-hairpin motif is present at residues 92–115 (YYDYYQPEAYVPSSDTFIEKDASV). In terms of domain architecture, Helicase C-terminal spans 431–597 (QVDDLLSEIR…GLNKKVVDIL (167 aa)). The disordered stretch occupies residues 608–627 (AKGRGKSRPIVEPDNVPMDM). The UVR domain occupies 633 to 668 (QQKIHELEGLMMQHAQNLEFEEAAQIRDQLHQLREL).

Belongs to the UvrB family. Forms a heterotetramer with UvrA during the search for lesions. Interacts with UvrC in an incision complex.

The protein resides in the cytoplasm. Its function is as follows. The UvrABC repair system catalyzes the recognition and processing of DNA lesions. A damage recognition complex composed of 2 UvrA and 2 UvrB subunits scans DNA for abnormalities. Upon binding of the UvrA(2)B(2) complex to a putative damaged site, the DNA wraps around one UvrB monomer. DNA wrap is dependent on ATP binding by UvrB and probably causes local melting of the DNA helix, facilitating insertion of UvrB beta-hairpin between the DNA strands. Then UvrB probes one DNA strand for the presence of a lesion. If a lesion is found the UvrA subunits dissociate and the UvrB-DNA preincision complex is formed. This complex is subsequently bound by UvrC and the second UvrB is released. If no lesion is found, the DNA wraps around the other UvrB subunit that will check the other stand for damage. The chain is UvrABC system protein B from Escherichia fergusonii (strain ATCC 35469 / DSM 13698 / CCUG 18766 / IAM 14443 / JCM 21226 / LMG 7866 / NBRC 102419 / NCTC 12128 / CDC 0568-73).